Here is a 287-residue protein sequence, read N- to C-terminus: MAIRKFKPYTPGTRQRVVTDFSEITGSKPERSLIVSKHRNKGRNNRGVITCRHRGGGHKRQYRLVDFRRDKRNINAKVAAIHYDPHRNARLALLFYEDGEKRYIIAPAGIKVGQNVISGDSVPIEDGNAMPLSVMPLGSSVHCVELYAGRGAQMVRSAGASAQLMAKEGDYVALKLPSTEVRLVRKECYATLGEVGNAEIRNTSLGKAGRTRWLGRRPQVRGSVMNPCDHPHGGGEGKAPIGRAGPVTPWGKAALGLKTRKKNKPSNNLVVRRRRRISKRSRGGRDS.

Positions 220–287 (VRGSVMNPCD…SKRSRGGRDS (68 aa)) are disordered. The segment covering 271–287 (VRRRRRISKRSRGGRDS) has biased composition (basic residues).

This sequence belongs to the universal ribosomal protein uL2 family. In terms of assembly, part of the 50S ribosomal subunit. Forms a bridge to the 30S subunit in the 70S ribosome.

Functionally, one of the primary rRNA binding proteins. Required for association of the 30S and 50S subunits to form the 70S ribosome, for tRNA binding and peptide bond formation. It has been suggested to have peptidyltransferase activity; this is somewhat controversial. Makes several contacts with the 16S rRNA in the 70S ribosome. In Prochlorococcus marinus (strain MIT 9515), this protein is Large ribosomal subunit protein uL2.